The following is a 269-amino-acid chain: Regulating synaptic membrane exocytosis protein 4 (269 aa).

The C2 domain occupies 115 to 233 (PMGGVEIGLQ…DLTTLAVGWY (119 aa)). Serine 254 and serine 257 each carry phosphoserine.

Binds PPFIA3. In terms of tissue distribution, brain specific.

The protein resides in the synapse. Functionally, regulates synaptic membrane exocytosis. The chain is Regulating synaptic membrane exocytosis protein 4 (Rims4) from Rattus norvegicus (Rat).